The primary structure comprises 319 residues: ATP-dependent 6-phosphofructokinase (319 aa).

G11 is an ATP binding site. 21–25 (RAVVR) serves as a coordination point for ADP. ATP-binding positions include 72–73 (RC) and 102–105 (GDGS). A Mg(2+)-binding site is contributed by D103. A substrate-binding site is contributed by 125–127 (TID). D127 (proton acceptor) is an active-site residue. R154 provides a ligand contact to ADP. Residues R162 and 169 to 171 (MGR) each bind substrate. ADP contacts are provided by residues 185–187 (GAE), R211, and 213–215 (KKH). Residues E222, R243, and 249 to 252 (HIQR) each bind substrate.

This sequence belongs to the phosphofructokinase type A (PFKA) family. ATP-dependent PFK group I subfamily. Prokaryotic clade 'B1' sub-subfamily. Homotetramer. Mg(2+) serves as cofactor.

The protein resides in the cytoplasm. The catalysed reaction is beta-D-fructose 6-phosphate + ATP = beta-D-fructose 1,6-bisphosphate + ADP + H(+). It functions in the pathway carbohydrate degradation; glycolysis; D-glyceraldehyde 3-phosphate and glycerone phosphate from D-glucose: step 3/4. Allosterically activated by ADP and other diphosphonucleosides, and allosterically inhibited by phosphoenolpyruvate. Catalyzes the phosphorylation of D-fructose 6-phosphate to fructose 1,6-bisphosphate by ATP, the first committing step of glycolysis. This is ATP-dependent 6-phosphofructokinase from Bacillus licheniformis (strain ATCC 14580 / DSM 13 / JCM 2505 / CCUG 7422 / NBRC 12200 / NCIMB 9375 / NCTC 10341 / NRRL NRS-1264 / Gibson 46).